The following is a 230-amino-acid chain: NAD(P)H-quinone oxidoreductase subunit K, chloroplastic (230 aa).

Positions 43, 44, 108, and 139 each coordinate [4Fe-4S] cluster.

It belongs to the complex I 20 kDa subunit family. NDH is composed of at least 16 different subunits, 5 of which are encoded in the nucleus. It depends on [4Fe-4S] cluster as a cofactor.

Its subcellular location is the plastid. It localises to the chloroplast thylakoid membrane. The enzyme catalyses a plastoquinone + NADH + (n+1) H(+)(in) = a plastoquinol + NAD(+) + n H(+)(out). It catalyses the reaction a plastoquinone + NADPH + (n+1) H(+)(in) = a plastoquinol + NADP(+) + n H(+)(out). Functionally, NDH shuttles electrons from NAD(P)H:plastoquinone, via FMN and iron-sulfur (Fe-S) centers, to quinones in the photosynthetic chain and possibly in a chloroplast respiratory chain. The immediate electron acceptor for the enzyme in this species is believed to be plastoquinone. Couples the redox reaction to proton translocation, and thus conserves the redox energy in a proton gradient. The chain is NAD(P)H-quinone oxidoreductase subunit K, chloroplastic from Lotus japonicus (Lotus corniculatus var. japonicus).